The primary structure comprises 102 residues: Small ribosomal subunit protein uS10 (102 aa).

This sequence belongs to the universal ribosomal protein uS10 family. In terms of assembly, part of the 30S ribosomal subunit.

In terms of biological role, involved in the binding of tRNA to the ribosomes. The protein is Small ribosomal subunit protein uS10 of Thermosipho melanesiensis (strain DSM 12029 / CIP 104789 / BI429).